The primary structure comprises 203 residues: Shikimate kinase (203 aa).

ATP is bound at residue 38–43; sequence GAGKST. Serine 42 provides a ligand contact to Mg(2+). 3 residues coordinate substrate: aspartate 60, arginine 84, and glycine 106. Residue arginine 144 participates in ATP binding. Arginine 163 is a binding site for substrate.

It belongs to the shikimate kinase family. Monomer. It depends on Mg(2+) as a cofactor.

It is found in the cytoplasm. The catalysed reaction is shikimate + ATP = 3-phosphoshikimate + ADP + H(+). The protein operates within metabolic intermediate biosynthesis; chorismate biosynthesis; chorismate from D-erythrose 4-phosphate and phosphoenolpyruvate: step 5/7. Its function is as follows. Catalyzes the specific phosphorylation of the 3-hydroxyl group of shikimic acid using ATP as a cosubstrate. The sequence is that of Shikimate kinase from Rhodopseudomonas palustris (strain ATCC BAA-98 / CGA009).